The following is a 562-amino-acid chain: Glutamate--tRNA ligase (562 aa).

Positions 104–114 match the 'HIGH' region motif; that stretch reads PNPDFYMTLGN.

It belongs to the class-I aminoacyl-tRNA synthetase family. Glutamate--tRNA ligase type 2 subfamily.

The protein localises to the cytoplasm. It catalyses the reaction tRNA(Glu) + L-glutamate + ATP = L-glutamyl-tRNA(Glu) + AMP + diphosphate. Catalyzes the attachment of glutamate to tRNA(Glu) in a two-step reaction: glutamate is first activated by ATP to form Glu-AMP and then transferred to the acceptor end of tRNA(Glu). The chain is Glutamate--tRNA ligase from Ignicoccus hospitalis (strain KIN4/I / DSM 18386 / JCM 14125).